A 198-amino-acid chain; its full sequence is Small ribosomal subunit protein eS1 (198 aa).

The protein belongs to the eukaryotic ribosomal protein eS1 family.

The polypeptide is Small ribosomal subunit protein eS1 (Methanosphaerula palustris (strain ATCC BAA-1556 / DSM 19958 / E1-9c)).